Consider the following 679-residue polypeptide: Transketolase 10 (679 aa).

Substrate is bound at residue H40. Residues H80 and 129–131 (GPL) contribute to the thiamine diphosphate site. Residue D170 coordinates Mg(2+). The thiamine diphosphate site is built by G171 and N200. Residues N200 and I202 each coordinate Mg(2+). 3 residues coordinate substrate: H277, R371, and S398. H277 serves as a coordination point for thiamine diphosphate. E425 and F452 together coordinate thiamine diphosphate. Residue E425 is the Proton donor of the active site. Positions 476, 484, and 535 each coordinate substrate.

Belongs to the transketolase family. As to quaternary structure, homodimer. Mg(2+) serves as cofactor. The cofactor is Ca(2+). It depends on Mn(2+) as a cofactor. Co(2+) is required as a cofactor. Requires thiamine diphosphate as cofactor. In terms of tissue distribution, leaves.

It catalyses the reaction D-sedoheptulose 7-phosphate + D-glyceraldehyde 3-phosphate = aldehydo-D-ribose 5-phosphate + D-xylulose 5-phosphate. In terms of biological role, could be involved in the conversion of sugars, which are a major phenomenon in the rehydration process. Functionally, catalyzes the transfer of a two-carbon ketol group from a ketose donor to an aldose acceptor, via a covalent intermediate with the cofactor thiamine pyrophosphate. This chain is Transketolase 10 (TKT10), found in Craterostigma plantagineum (Blue gem).